The following is a 282-amino-acid chain: tRNA uridine(34) hydroxylase (282 aa).

One can recognise a Rhodanese domain in the interval 128 to 222 (DGRPVVMLDT…YFEEVGGSHY (95 aa)). Catalysis depends on cysteine 182, which acts as the Cysteine persulfide intermediate.

The protein belongs to the TrhO family.

The enzyme catalyses uridine(34) in tRNA + AH2 + O2 = 5-hydroxyuridine(34) in tRNA + A + H2O. In terms of biological role, catalyzes oxygen-dependent 5-hydroxyuridine (ho5U) modification at position 34 in tRNAs. The polypeptide is tRNA uridine(34) hydroxylase (Cupriavidus metallidurans (strain ATCC 43123 / DSM 2839 / NBRC 102507 / CH34) (Ralstonia metallidurans)).